A 509-amino-acid polypeptide reads, in one-letter code: Sulfoacetate--CoA ligase (509 aa).

The segment at 320 to 340 (AFSNPLDPGQRRIGSIGRPSG) is disordered.

The protein belongs to the ATP-dependent AMP-binding enzyme family.

It localises to the cytoplasm. It carries out the reaction sulfoacetate + ATP + CoA = sulfoacetyl-CoA + AMP + diphosphate. Involved in the degradation of sulfoacetate, a widespread natural product. Catalyzes the CoA- and ATP-dependent conversion of sulfoacetate to sulfoacetyl-CoA and AMP. In Cupriavidus necator (strain ATCC 17699 / DSM 428 / KCTC 22496 / NCIMB 10442 / H16 / Stanier 337) (Ralstonia eutropha), this protein is Sulfoacetate--CoA ligase.